The primary structure comprises 714 residues: Fatty acid oxidation complex subunit alpha (714 aa).

Residues 1 to 190 (MEMASAFTLN…KLGLVDDVVP (190 aa)) are enoyl-CoA hydratase. The segment at 306–714 (APLNSVGILG…FWKTTATDLQ (409 aa)) is 3-hydroxyacyl-CoA dehydrogenase.

This sequence in the N-terminal section; belongs to the enoyl-CoA hydratase/isomerase family. It in the central section; belongs to the 3-hydroxyacyl-CoA dehydrogenase family. Heterotetramer of two alpha chains (FadJ) and two beta chains (FadI).

Its subcellular location is the cytoplasm. The enzyme catalyses a (3S)-3-hydroxyacyl-CoA = a (2E)-enoyl-CoA + H2O. The catalysed reaction is a 4-saturated-(3S)-3-hydroxyacyl-CoA = a (3E)-enoyl-CoA + H2O. It carries out the reaction a (3S)-3-hydroxyacyl-CoA + NAD(+) = a 3-oxoacyl-CoA + NADH + H(+). It catalyses the reaction (3S)-3-hydroxybutanoyl-CoA = (3R)-3-hydroxybutanoyl-CoA. It participates in lipid metabolism; fatty acid beta-oxidation. In terms of biological role, catalyzes the formation of a hydroxyacyl-CoA by addition of water on enoyl-CoA. Also exhibits 3-hydroxyacyl-CoA epimerase and 3-hydroxyacyl-CoA dehydrogenase activities. In Escherichia coli O6:H1 (strain CFT073 / ATCC 700928 / UPEC), this protein is Fatty acid oxidation complex subunit alpha.